Here is an 831-residue protein sequence, read N- to C-terminus: Periplasmic nitrate reductase (831 aa).

Positions 1–29 (MKISRRDFIKQTAITATASVAGVTLPAGA) form a signal peptide, tat-type signal. The 4Fe-4S Mo/W bis-MGD-type domain maps to 41-97 (LKWSKAPCRFCGTGCGVTVAVKDNKVVATQGDPQAEVNKGLNCVKGYFLSKIMYGQD). [4Fe-4S] cluster-binding residues include C48, C51, C55, and C83. Residues K85, Q152, N177, C181, 214–221 (WGSNMAEM), 245–249 (STFTH), 264–266 (QTD), M375, Q379, N485, 511–512 (SD), K534, D561, and 721–730 (TGRVLEHWHS) each bind Mo-bis(molybdopterin guanine dinucleotide). Residue W797 coordinates substrate. 2 residues coordinate Mo-bis(molybdopterin guanine dinucleotide): N805 and K822.

This sequence belongs to the prokaryotic molybdopterin-containing oxidoreductase family. NasA/NapA/NarB subfamily. In terms of assembly, component of the periplasmic nitrate reductase NapAB complex composed of NapA and NapB. It depends on [4Fe-4S] cluster as a cofactor. Mo-bis(molybdopterin guanine dinucleotide) is required as a cofactor. Predicted to be exported by the Tat system. The position of the signal peptide cleavage has been experimentally proven.

The protein resides in the periplasm. It carries out the reaction 2 Fe(II)-[cytochrome] + nitrate + 2 H(+) = 2 Fe(III)-[cytochrome] + nitrite + H2O. Its function is as follows. Catalytic subunit of the periplasmic nitrate reductase complex NapAB. Receives electrons from NapB and catalyzes the reduction of nitrate to nitrite. The polypeptide is Periplasmic nitrate reductase (Cupriavidus necator (strain ATCC 17699 / DSM 428 / KCTC 22496 / NCIMB 10442 / H16 / Stanier 337) (Ralstonia eutropha)).